The following is a 219-amino-acid chain: Ribose-5-phosphate isomerase A (219 aa).

Substrate-binding positions include 28 to 31 (TGST), 81 to 84 (DGAD), and 94 to 97 (KGGG). Glutamate 103 acts as the Proton acceptor in catalysis. A substrate-binding site is contributed by lysine 121.

The protein belongs to the ribose 5-phosphate isomerase family. Homodimer.

The catalysed reaction is aldehydo-D-ribose 5-phosphate = D-ribulose 5-phosphate. The protein operates within carbohydrate degradation; pentose phosphate pathway; D-ribose 5-phosphate from D-ribulose 5-phosphate (non-oxidative stage): step 1/1. Its function is as follows. Catalyzes the reversible conversion of ribose-5-phosphate to ribulose 5-phosphate. This Edwardsiella ictaluri (strain 93-146) protein is Ribose-5-phosphate isomerase A.